Reading from the N-terminus, the 375-residue chain is 2-heptyl-3-hydroxy-4(1H)-quinolone synthase (375 aa).

The protein belongs to the 3-hydroxybenzoate 6-hydroxylase family.

It carries out the reaction 2-heptyl-4(1H)-quinolone + NADH + O2 + H(+) = 2-heptyl-3-hydroxy-4(1H)-quinolone + NAD(+) + H2O. Functionally, involved in the degradation pathway of the Pseudomonas aeruginosa quorum sensing signal molecule HHQ (2-heptyl-4(1H)-quinolone) to anthranilate. Catalyzes the hydroxylation of HHQ to PQS (2-heptyl-3-hydroxy-4(1H)-quinolone). The polypeptide is 2-heptyl-3-hydroxy-4(1H)-quinolone synthase (Mycobacteroides abscessus (strain ATCC 19977 / DSM 44196 / CCUG 20993 / CIP 104536 / JCM 13569 / NCTC 13031 / TMC 1543 / L948) (Mycobacterium abscessus)).